The following is a 224-amino-acid chain: UPF0758 protein VF_0126 (224 aa).

The 123-residue stretch at 102–224 (ALTSPEHTKR…IVSFAERGWI (123 aa)) folds into the MPN domain. 3 residues coordinate Zn(2+): H173, H175, and D186. Positions 173–186 (HNHPSGVAEPSQAD) match the JAMM motif motif.

Belongs to the UPF0758 family.

This is UPF0758 protein VF_0126 from Aliivibrio fischeri (strain ATCC 700601 / ES114) (Vibrio fischeri).